The chain runs to 128 residues: Ribonuclease P protein component (128 aa).

This sequence belongs to the RnpA family. In terms of assembly, consists of a catalytic RNA component (M1 or rnpB) and a protein subunit.

It catalyses the reaction Endonucleolytic cleavage of RNA, removing 5'-extranucleotides from tRNA precursor.. RNaseP catalyzes the removal of the 5'-leader sequence from pre-tRNA to produce the mature 5'-terminus. It can also cleave other RNA substrates such as 4.5S RNA. The protein component plays an auxiliary but essential role in vivo by binding to the 5'-leader sequence and broadening the substrate specificity of the ribozyme. This Prochlorococcus marinus (strain NATL2A) protein is Ribonuclease P protein component.